The primary structure comprises 206 residues: Small ribosomal subunit protein uS4 (206 aa).

One can recognise an S4 RNA-binding domain in the interval 96–159; sequence SRLDNVVYRM…KKQARIVEGL (64 aa).

This sequence belongs to the universal ribosomal protein uS4 family. Part of the 30S ribosomal subunit. Contacts protein S5. The interaction surface between S4 and S5 is involved in control of translational fidelity.

Its function is as follows. One of the primary rRNA binding proteins, it binds directly to 16S rRNA where it nucleates assembly of the body of the 30S subunit. In terms of biological role, with S5 and S12 plays an important role in translational accuracy. The chain is Small ribosomal subunit protein uS4 from Chromobacterium violaceum (strain ATCC 12472 / DSM 30191 / JCM 1249 / CCUG 213 / NBRC 12614 / NCIMB 9131 / NCTC 9757 / MK).